Consider the following 474-residue polypeptide: tRNA-2-methylthio-N(6)-dimethylallyladenosine synthase (474 aa).

The MTTase N-terminal domain occupies Lys-3–Ile-120. [4Fe-4S] cluster contacts are provided by Cys-12, Cys-49, Cys-83, Cys-157, Cys-161, and Cys-164. In terms of domain architecture, Radical SAM core spans Arg-143–Arg-382. The TRAM domain occupies Val-381–Arg-444.

It belongs to the methylthiotransferase family. MiaB subfamily. In terms of assembly, monomer. Requires [4Fe-4S] cluster as cofactor.

The protein resides in the cytoplasm. It catalyses the reaction N(6)-dimethylallyladenosine(37) in tRNA + (sulfur carrier)-SH + AH2 + 2 S-adenosyl-L-methionine = 2-methylsulfanyl-N(6)-dimethylallyladenosine(37) in tRNA + (sulfur carrier)-H + 5'-deoxyadenosine + L-methionine + A + S-adenosyl-L-homocysteine + 2 H(+). Its function is as follows. Catalyzes the methylthiolation of N6-(dimethylallyl)adenosine (i(6)A), leading to the formation of 2-methylthio-N6-(dimethylallyl)adenosine (ms(2)i(6)A) at position 37 in tRNAs that read codons beginning with uridine. This Nitrosospira multiformis (strain ATCC 25196 / NCIMB 11849 / C 71) protein is tRNA-2-methylthio-N(6)-dimethylallyladenosine synthase.